The sequence spans 715 residues: Fatty acid oxidation complex subunit alpha (715 aa).

The tract at residues 1–189 is enoyl-CoA hydratase/isomerase; the sequence is MIYQGETLSV…KVGAIDAVVA (189 aa). A substrate-binding site is contributed by D296. The 3-hydroxyacyl-CoA dehydrogenase stretch occupies residues 311 to 715; it reads AKATRHAAVL…EMAAQGKTFY (405 aa). NAD(+)-binding positions include M325, D344, 401–403, K408, and S430; that span reads VVE. H451 functions as the For 3-hydroxyacyl-CoA dehydrogenase activity in the catalytic mechanism. NAD(+) is bound at residue N454. Substrate contacts are provided by N501 and Y661.

It in the N-terminal section; belongs to the enoyl-CoA hydratase/isomerase family. This sequence in the C-terminal section; belongs to the 3-hydroxyacyl-CoA dehydrogenase family. In terms of assembly, heterotetramer of two alpha chains (FadB) and two beta chains (FadA).

The catalysed reaction is a (3S)-3-hydroxyacyl-CoA + NAD(+) = a 3-oxoacyl-CoA + NADH + H(+). It catalyses the reaction a (3S)-3-hydroxyacyl-CoA = a (2E)-enoyl-CoA + H2O. The enzyme catalyses a 4-saturated-(3S)-3-hydroxyacyl-CoA = a (3E)-enoyl-CoA + H2O. It carries out the reaction (3S)-3-hydroxybutanoyl-CoA = (3R)-3-hydroxybutanoyl-CoA. The catalysed reaction is a (3Z)-enoyl-CoA = a 4-saturated (2E)-enoyl-CoA. It catalyses the reaction a (3E)-enoyl-CoA = a 4-saturated (2E)-enoyl-CoA. The protein operates within lipid metabolism; fatty acid beta-oxidation. Functionally, involved in the aerobic and anaerobic degradation of long-chain fatty acids via beta-oxidation cycle. Catalyzes the formation of 3-oxoacyl-CoA from enoyl-CoA via L-3-hydroxyacyl-CoA. It can also use D-3-hydroxyacyl-CoA and cis-3-enoyl-CoA as substrate. This Aeromonas salmonicida (strain A449) protein is Fatty acid oxidation complex subunit alpha.